The primary structure comprises 115 residues: Large ribosomal subunit protein bL20 (115 aa).

This sequence belongs to the bacterial ribosomal protein bL20 family.

Its function is as follows. Binds directly to 23S ribosomal RNA and is necessary for the in vitro assembly process of the 50S ribosomal subunit. It is not involved in the protein synthesizing functions of that subunit. The protein is Large ribosomal subunit protein bL20 of Prochlorococcus marinus (strain AS9601).